Consider the following 239-residue polypeptide: Peroxygenase (239 aa).

N-acetylglycine is present on Gly2. An EF-hand domain is found at 60–95 (HNMSVLQQRAAFFDRNNDGIVYPWETYQGFRAVGFG). Residues Asp73, Asn75, Asp77, and Glu84 each coordinate Ca(2+). The Proline-knot motif lies at 116 to 125 (PSWIPSPVLS).

Belongs to the caleosin family. Homodimer. Heme b serves as cofactor. It depends on Ca(2+) as a cofactor. Expressed in pollen (at protein level). Not expressed in leaf, root, stem, tepal, ovary, style, filament or stigma (at protein level).

It localises to the lipid droplet. It is found in the microsome membrane. The catalysed reaction is RH + ROOH = ROH + ROH.. Its function is as follows. Calcium-binding peroxygenase involved in the degradation of storage lipid in oil bodies. In Lilium longiflorum (Trumpet lily), this protein is Peroxygenase.